A 381-amino-acid polypeptide reads, in one-letter code: MVYNFKVFKKCAPNGKITLYMAKRDFVDHISTVEPIDGVVLLDEEYVRGRKVFGQMVCTFRYGREEDEVMGLNFYKELFLASEQIYPPPEKRNYELSRTQERLIKKLGDGAIPFRLTVPPGAPGSVILQPGLEDDGEPCGVQYYVKIFVGDSEIDRSHRRSTVALGIRKVQYAPAKPGPQPCTVVRKDFVLSPGQLELELTLDKQLYIHGETVAVNMCVRNHSNKVVKKIKACIQQGVDVVLFQNGQYRNIVASIETQDGCPLQPGSSLQKVLHLTPTLAHNRDKRGIALDGQLKRSDTTLASTTLLLDPDQRDAFGIVVSYSAKVKLYLGAISGELVAELPFILMHPKEGRVKMIHADSQADVEMFRQDTVHHQESVEVY.

This sequence belongs to the arrestin family.

This chain is Arrestin homolog, found in Heliothis virescens (Tobacco budworm moth).